Here is a 185-residue protein sequence, read N- to C-terminus: Transcription factor FapR (185 aa).

Belongs to the FapR family.

Transcriptional factor involved in regulation of membrane lipid biosynthesis by repressing genes involved in fatty acid and phospholipid metabolism. This Staphylococcus aureus (strain Mu3 / ATCC 700698) protein is Transcription factor FapR.